A 235-amino-acid polypeptide reads, in one-letter code: Vacuolar protein sorting-associated protein 60.2 (235 aa).

Residues 1–30 form a disordered region; that stretch reads MKRIFGAKNNKEPPPSIQDASDRINKRGDS. A compositionally biased stretch (basic and acidic residues) spans 20–30; it reads ASDRINKRGDS. Residues 99–148 adopt a coiled-coil conformation; it reads LKDAQQTMTALKSANKELKGMMKTVKIQDIDNLQDDMMDLMDESSEIQET. Positions 174–235 are disordered; the sequence is DMGNETEADG…PAVPRASLRG (62 aa).

Belongs to the SNF7 family.

It localises to the endosome. Its subcellular location is the multivesicular body membrane. In terms of biological role, probable peripherally associated component of the endosomal sorting required for transport complex III (ESCRT-III) which is involved in multivesicular bodies (MVBs) formation and sorting of endosomal cargo proteins into MVBs. This Arabidopsis thaliana (Mouse-ear cress) protein is Vacuolar protein sorting-associated protein 60.2.